A 493-amino-acid polypeptide reads, in one-letter code: Ribonuclease Y (493 aa).

The chain crosses the membrane as a helical span at residues 19-39; that stretch reads IFAILFLIIVILNLGLLVFLA. The KH domain maps to 172-241; that stretch reads SASFTVIESD…LTIRNILIND (70 aa). Positions 300-392 constitute an HD domain; that stretch reads VLSHCLETGF…TQIGDKLSAG (93 aa).

Belongs to the RNase Y family.

Its subcellular location is the cell membrane. Endoribonuclease that initiates mRNA decay. The chain is Ribonuclease Y from Mycoplasma pneumoniae (strain ATCC 29342 / M129 / Subtype 1) (Mycoplasmoides pneumoniae).